The primary structure comprises 321 residues: tRNA-dihydrouridine synthase B (321 aa).

Residues 16–18 (PMA) and Q70 contribute to the FMN site. C100 acts as the Proton donor in catalysis. Residues K139, 200-202 (NGD), and 224-225 (GR) contribute to the FMN site.

The protein belongs to the Dus family. DusB subfamily. It depends on FMN as a cofactor.

The enzyme catalyses a 5,6-dihydrouridine in tRNA + NAD(+) = a uridine in tRNA + NADH + H(+). It catalyses the reaction a 5,6-dihydrouridine in tRNA + NADP(+) = a uridine in tRNA + NADPH + H(+). Its function is as follows. Catalyzes the synthesis of 5,6-dihydrouridine (D), a modified base found in the D-loop of most tRNAs, via the reduction of the C5-C6 double bond in target uridines. The chain is tRNA-dihydrouridine synthase B from Salmonella typhi.